The following is a 729-amino-acid chain: Fatty acid oxidation complex subunit alpha (729 aa).

Residues 1–189 (MLYKGDTLYL…KIGLVDGVVK (189 aa)) form an enoyl-CoA hydratase/isomerase region. Substrate is bound at residue Asp-296. The tract at residues 311-729 (ETPKQAAVLG…ARPVGSLKTA (419 aa)) is 3-hydroxyacyl-CoA dehydrogenase. NAD(+) contacts are provided by residues Met-324, Asp-343, 400-402 (VVE), Lys-407, and Ser-429. Catalysis depends on His-450, which acts as the For 3-hydroxyacyl-CoA dehydrogenase activity. Asn-453 lines the NAD(+) pocket. The substrate site is built by Asn-500 and Tyr-660. The interval 708 to 729 (RHNEPYYPPVEPARPVGSLKTA) is disordered.

It in the N-terminal section; belongs to the enoyl-CoA hydratase/isomerase family. This sequence in the C-terminal section; belongs to the 3-hydroxyacyl-CoA dehydrogenase family. In terms of assembly, heterotetramer of two alpha chains (FadB) and two beta chains (FadA).

The catalysed reaction is a (3S)-3-hydroxyacyl-CoA + NAD(+) = a 3-oxoacyl-CoA + NADH + H(+). It catalyses the reaction a (3S)-3-hydroxyacyl-CoA = a (2E)-enoyl-CoA + H2O. It carries out the reaction a 4-saturated-(3S)-3-hydroxyacyl-CoA = a (3E)-enoyl-CoA + H2O. The enzyme catalyses (3S)-3-hydroxybutanoyl-CoA = (3R)-3-hydroxybutanoyl-CoA. The catalysed reaction is a (3Z)-enoyl-CoA = a 4-saturated (2E)-enoyl-CoA. It catalyses the reaction a (3E)-enoyl-CoA = a 4-saturated (2E)-enoyl-CoA. The protein operates within lipid metabolism; fatty acid beta-oxidation. Functionally, involved in the aerobic and anaerobic degradation of long-chain fatty acids via beta-oxidation cycle. Catalyzes the formation of 3-oxoacyl-CoA from enoyl-CoA via L-3-hydroxyacyl-CoA. It can also use D-3-hydroxyacyl-CoA and cis-3-enoyl-CoA as substrate. The protein is Fatty acid oxidation complex subunit alpha of Salmonella enteritidis PT4 (strain P125109).